The chain runs to 402 residues: S-adenosylmethionine synthase (402 aa).

140 to 145 provides a ligand contact to ATP; that stretch reads GNGSID.

This sequence belongs to the AdoMet synthase 2 family. It depends on Mg(2+) as a cofactor.

It catalyses the reaction L-methionine + ATP + H2O = S-adenosyl-L-methionine + phosphate + diphosphate. Its pathway is amino-acid biosynthesis; S-adenosyl-L-methionine biosynthesis; S-adenosyl-L-methionine from L-methionine: step 1/1. Its function is as follows. Catalyzes the formation of S-adenosylmethionine from methionine and ATP. The protein is S-adenosylmethionine synthase of Picrophilus torridus (strain ATCC 700027 / DSM 9790 / JCM 10055 / NBRC 100828 / KAW 2/3).